The primary structure comprises 466 residues: Asparagine--tRNA ligase (466 aa).

This sequence belongs to the class-II aminoacyl-tRNA synthetase family. In terms of assembly, homodimer.

It localises to the cytoplasm. It carries out the reaction tRNA(Asn) + L-asparagine + ATP = L-asparaginyl-tRNA(Asn) + AMP + diphosphate + H(+). This chain is Asparagine--tRNA ligase, found in Xylella fastidiosa (strain 9a5c).